Here is a 318-residue protein sequence, read N- to C-terminus: MKPLNIIFAGTPDFAARHLQALINSHHNVIAVYTQPDRPAGRGKKLTASPVKELAVSHDIPVYQPGSLRKEPAQQELAALNADIMVVVAYGLILPKVVLDTPRLGCINVHGSILPRWRGAAPIQRALWAGDKETGVTIMQMDVGLDTGDMLLKTYLPIEDDDTSATLYEKLAQQGPDALLQALEGLANGTLTAEKQDEALANYAEKLSKEEARLDWSKSATQLWQEVRAFNPWPVSYFEHQGNTIKVWQTQISTTSSNAAPGTIISASKKGIEVATGDGVLTLLSMQLPGKKPLSVADILNARGDWFTPNTRLNNEAQ.

Residue 112–115 (SILP) coordinates (6S)-5,6,7,8-tetrahydrofolate.

It belongs to the Fmt family.

The enzyme catalyses L-methionyl-tRNA(fMet) + (6R)-10-formyltetrahydrofolate = N-formyl-L-methionyl-tRNA(fMet) + (6S)-5,6,7,8-tetrahydrofolate + H(+). Functionally, attaches a formyl group to the free amino group of methionyl-tRNA(fMet). The formyl group appears to play a dual role in the initiator identity of N-formylmethionyl-tRNA by promoting its recognition by IF2 and preventing the misappropriation of this tRNA by the elongation apparatus. This Shewanella sp. (strain MR-7) protein is Methionyl-tRNA formyltransferase.